The primary structure comprises 161 residues: Allophycocyanin alpha chain (161 aa).

N71 carries the post-translational modification N4-methylasparagine. C81 serves as a coordination point for (2R,3E)-phycocyanobilin.

Belongs to the phycobiliprotein family. Heterodimer of an alpha and a beta chain. Contains one covalently linked phycocyanobilin chromophore.

It localises to the plastid. Its subcellular location is the chloroplast thylakoid membrane. Light-harvesting photosynthetic bile pigment-protein from the phycobiliprotein complex. Allophycocyanin has a maximum absorption at approximately 650 nanometers. This chain is Allophycocyanin alpha chain (apcA), found in Cyanidium caldarium (Red alga).